Reading from the N-terminus, the 413-residue chain is D-nopaline dehydrogenase (413 aa).

This sequence belongs to the lysopine/nopaline/octopine/opine/vitopine dehydrogenases family. Homotetramer.

The catalysed reaction is D-nopaline + NADP(+) + H2O = L-arginine + 2-oxoglutarate + NADPH + H(+). The protein is D-nopaline dehydrogenase (nos) of Agrobacterium tumefaciens (strain T37).